Reading from the N-terminus, the 466-residue chain is Chromosomal replication initiator protein DnaA (466 aa).

Residues 1 to 85 form a domain I, interacts with DnaA modulators region; the sequence is MSLSLWQHCL…FEVGNKPVSA (85 aa). Positions 82 to 122 are disordered; that stretch reads PVSARTTESVPKTVTHPAVNSTPTNSQPVRPSWDNQPQSQL. A compositionally biased stretch (polar residues) spans 85–122; the sequence is ARTTESVPKTVTHPAVNSTPTNSQPVRPSWDNQPQSQL. The interval 85 to 129 is domain II; that stretch reads ARTTESVPKTVTHPAVNSTPTNSQPVRPSWDNQPQSQLPELNYRS. Residues 130–346 form a domain III, AAA+ region region; that stretch reads NVNPKHKFDN…GALNRVIANA (217 aa). Positions 174, 176, 177, and 178 each coordinate ATP. The segment at 347–466 is domain IV, binds dsDNA; the sequence is NFTGRAITID…FSNLIRTLSS (120 aa).

This sequence belongs to the DnaA family. In terms of assembly, oligomerizes as a right-handed, spiral filament on DNA at oriC.

Its subcellular location is the cytoplasm. Functionally, plays an essential role in the initiation and regulation of chromosomal replication. ATP-DnaA binds to the origin of replication (oriC) to initiate formation of the DNA replication initiation complex once per cell cycle. Binds the DnaA box (a 9 base pair repeat at the origin) and separates the double-stranded (ds)DNA. Forms a right-handed helical filament on oriC DNA; dsDNA binds to the exterior of the filament while single-stranded (ss)DNA is stabiized in the filament's interior. The ATP-DnaA-oriC complex binds and stabilizes one strand of the AT-rich DNA unwinding element (DUE), permitting loading of DNA polymerase. After initiation quickly degrades to an ADP-DnaA complex that is not apt for DNA replication. Binds acidic phospholipids. The protein is Chromosomal replication initiator protein DnaA of Proteus mirabilis (strain HI4320).